The following is a 3032-amino-acid chain: Compactin nonaketide synthase, polyketide synthase component (3032 aa).

In terms of domain architecture, Ketosynthase family 3 (KS3) spans 8 to 447 (NEPIVVVGSG…GTNAHAIIEE (440 aa)). Residues cysteine 181, histidine 320, and histidine 367 each act as for beta-ketoacyl synthase activity in the active site. The interval 560–901 (VFTGQGAQWP…GYIWERFGVR (342 aa)) is acyl and malonyl transferase. Serine 654 functions as the For malonyltransferase activity in the catalytic mechanism. Residues 953–1089 (HLLLGKLSSY…GQIVITLGEA (137 aa)) form an N-terminal hotdog fold region. The PKS/mFAS DH domain maps to 953 to 1261 (HLLLGKLSSY…FKPFSPPTAS (309 aa)). The active-site Proton acceptor; for dehydratase activity is histidine 985. Positions 985-997 (HALQGQTVFPAAG) are dehydratase-like. Residues 1106–1261 (MNNVNIDFFY…FKPFSPPTAS (156 aa)) form a C-terminal hotdog fold region. Catalysis depends on aspartate 1168, which acts as the Proton donor; for dehydratase activity. Residues 1506 to 1544 (YDLIIASDVLHASSNFEEKLAHIRSLLKPGGHLVTFGVT) are methyltransferase. A Carrier domain is found at 2441–2520 (DQVRQIVIDG…DLADDAATRL (80 aa)). Serine 2480 carries the O-(pantetheine 4'-phosphoryl)serine modification. The tract at residues 2531–2580 (IGDSTGTSDSGASPTPTDSHDEASSATSTDASSAEEDEEQEDDNEQGGRK) is disordered. Low complexity predominate over residues 2532–2547 (GDSTGTSDSGASPTPT). Residues 2563–2575 (SAEEDEEQEDDNE) are compositionally biased toward acidic residues. The segment at 2586-2946 (RLSLGQEYSW…PKTQTHAPLF (361 aa)) is peptide synthetase elongation.

It depends on pantetheine 4'-phosphate as a cofactor.

It carries out the reaction holo-[compactin nonaketide synthase] + 9 malonyl-CoA + 11 NADPH + 20 H(+) = dihydro-ML-236C-[compactin nonaketide synthase] + 9 CO2 + 11 NADP(+) + 9 CoA + 6 H2O. It functions in the pathway polyketide biosynthesis. Nonaketide synthase; part of the gene cluster that mediates the biosynthesis of compactin, also known as mevastatin or ML-236B, and which acts as a potent competitive inhibitor of HMG-CoA reductase. Compactin biosynthesis is performed in two stages. The first stage is catalyzed by the nonaketide synthase mlcA, which belongs to type I polyketide synthases and catalyzes the iterative nine-step formation of the polyketide. This PKS stage is completed by the action of dehydrogenase mlcG, which catalyzes the NADPH-dependent reduction of the unsaturated tetra-, penta- and heptaketide intermediates that arise during the mlcA-mediated biosynthesis of the nonaketide chain and leads to dihydro-ML-236C carboxylate. Covalently bound dihydro-ML-236C carboxylate is released from mlcA by the mlcF esterase. Conversion of dihydro-ML-236C carboxylate into ML-236A carboxylate is subsequently performed with the participation of molecular oxygen and P450 monoogygenase mlcC. Finally, mlcH performs the conversion of ML-236A carboxylate to ML-236B/compactin carboxylate through the addition of the side-chain diketide moiety produced by the diketide synthase mlcB. The sequence is that of Compactin nonaketide synthase, polyketide synthase component from Penicillium citrinum.